The following is a 462-amino-acid chain: SET domain-containing protein SmydA-8, isoform A (462 aa).

Residues P55 to T287 enclose the SET domain.

This sequence belongs to the class V-like SAM-binding methyltransferase superfamily.

This chain is SET domain-containing protein SmydA-8, isoform A, found in Drosophila melanogaster (Fruit fly).